A 372-amino-acid polypeptide reads, in one-letter code: Serine proteinase inhibitor 1 (372 aa).

Belongs to the serpin family. Poxviruses subfamily.

Its subcellular location is the host cytoplasm. Functionally, plays a role in mediating viral host range. May act to inhibit a caspase independent form of apoptosis to allow efficient virus replication in infected cells. The sequence is that of Serine proteinase inhibitor 1 (OPG208) from Homo sapiens (Human).